The chain runs to 149 residues: Protein TraJ (149 aa).

Its subcellular location is the cell membrane. In terms of biological role, this protein is essential for positively regulating the expression of transfer genes that are involved in the conjugal transfer of DNA between bacterial cells. In Escherichia coli, this protein is Protein TraJ (traJ).